Consider the following 123-residue polypeptide: Putative oocyte-secreted protein 1 homolog (123 aa).

Residues 1-26 (MKTILGFKGLFYLHSLIWTCAGDWSA) form the signal peptide.

It belongs to the PLAC1 family.

The protein localises to the secreted. May be involved in cell differentiation. The polypeptide is Putative oocyte-secreted protein 1 homolog (OOSP1) (Homo sapiens (Human)).